The chain runs to 154 residues: 6,7-dimethyl-8-ribityllumazine synthase (154 aa).

Residues phenylalanine 22, 56–58, and 81–83 contribute to the 5-amino-6-(D-ribitylamino)uracil site; these read SFE and VLI. 86–87 is a (2S)-2-hydroxy-3-oxobutyl phosphate binding site; sequence ET. Catalysis depends on histidine 89, which acts as the Proton donor. Position 114 (phenylalanine 114) interacts with 5-amino-6-(D-ribitylamino)uracil. Arginine 128 is a (2S)-2-hydroxy-3-oxobutyl phosphate binding site.

This sequence belongs to the DMRL synthase family.

The enzyme catalyses (2S)-2-hydroxy-3-oxobutyl phosphate + 5-amino-6-(D-ribitylamino)uracil = 6,7-dimethyl-8-(1-D-ribityl)lumazine + phosphate + 2 H2O + H(+). It participates in cofactor biosynthesis; riboflavin biosynthesis; riboflavin from 2-hydroxy-3-oxobutyl phosphate and 5-amino-6-(D-ribitylamino)uracil: step 1/2. Catalyzes the formation of 6,7-dimethyl-8-ribityllumazine by condensation of 5-amino-6-(D-ribitylamino)uracil with 3,4-dihydroxy-2-butanone 4-phosphate. This is the penultimate step in the biosynthesis of riboflavin. In Chlamydia caviae (strain ATCC VR-813 / DSM 19441 / 03DC25 / GPIC) (Chlamydophila caviae), this protein is 6,7-dimethyl-8-ribityllumazine synthase.